A 120-amino-acid polypeptide reads, in one-letter code: Large ribosomal subunit protein bL17 (120 aa).

It belongs to the bacterial ribosomal protein bL17 family. As to quaternary structure, part of the 50S ribosomal subunit. Contacts protein L32.

This chain is Large ribosomal subunit protein bL17, found in Halalkalibacterium halodurans (strain ATCC BAA-125 / DSM 18197 / FERM 7344 / JCM 9153 / C-125) (Bacillus halodurans).